Reading from the N-terminus, the 72-residue chain is MMLTCQFNDGDTWLGLWLLCAFIVGMLGLLLMHYRAVQGDKHTKCKKCNKHNCNDDYVTMHYTTDGDYIYMN.

The protein is Probable protein E5B of Homo sapiens (Human).